The chain runs to 181 residues: ATP-dependent protease subunit HslV (181 aa).

Threonine 7 is an active-site residue. Na(+) contacts are provided by glycine 166, cysteine 169, and threonine 172.

The protein belongs to the peptidase T1B family. HslV subfamily. As to quaternary structure, a double ring-shaped homohexamer of HslV is capped on each side by a ring-shaped HslU homohexamer. The assembly of the HslU/HslV complex is dependent on binding of ATP.

The protein resides in the cytoplasm. The enzyme catalyses ATP-dependent cleavage of peptide bonds with broad specificity.. With respect to regulation, allosterically activated by HslU binding. Functionally, protease subunit of a proteasome-like degradation complex believed to be a general protein degrading machinery. In Acidovorax ebreus (strain TPSY) (Diaphorobacter sp. (strain TPSY)), this protein is ATP-dependent protease subunit HslV.